We begin with the raw amino-acid sequence, 586 residues long: Ezrin (586 aa).

Residues 2–295 (PKPINVRVTT…GNHELYMRRR (294 aa)) form the FERM domain. Position 60 is an N6-acetyllysine (Lys-60). Residues 115 to 120 (IYCPPE) carry the [IL]-x-C-x-x-[DE] motif motif. Position 146 is a phosphotyrosine; by PDGFR (Tyr-146). The tract at residues 244-586 (EIRNISFNDK…KQRIDEFEAM (343 aa)) is interaction with SCYL3. Positions 302–462 (VQQMKAQARE…QDDLVKTKEE (161 aa)) form a coiled coil. Residues 305 to 340 (MKAQAREEKHQKQLERQQLESEKKRREAVEQEKEQM) form a disordered region. A compositionally biased stretch (basic and acidic residues) spans 308–340 (QAREEKHQKQLERQQLESEKKRREAVEQEKEQM). Tyr-354 carries the post-translational modification Phosphotyrosine; by PDGFR. Ser-366 carries the post-translational modification Phosphoserine. Tyr-478 carries the phosphotyrosine modification. The residue at position 535 (Ser-535) is a Phosphoserine. The residue at position 567 (Thr-567) is a Phosphothreonine; by ROCK2 and PKC/PRKCI.

Interacts with PALS1. Found in a complex with EZR, PODXL and NHERF2. Interacts with MCC, PLEKHG6, PODXL, SCYL3/PACE1, NHERF1, NHERF2 and TMEM8B. Interacts (when phosphorylated) with FES/FPS. Interacts with dimeric S100P, the interaction may be activating through unmasking of F-actin binding sites. Identified in complexes that contain VIM, EZR, AHNAK, BFSP1, BFSP2, ANK2, PLEC, PRX and spectrin. Detected in a complex composed of at least EZR, AHNAK, PPL and PRX. Interacts with PDPN (via cytoplasmic domain); activates RHOA and promotes epithelial-mesenchymal transition. Interacts with SPN/CD43 cytoplasmic tail, CD44 and ICAM2. Interacts with SLC9A3; interaction targets SLC9A3 to the apical membrane. Interacts with SLC9A1; regulates interactions of SLC9A1 with cytoskeletal and promotes stress fiber formation. Interacts with CLIC5; may work together in a complex which also includes RDX and MYO6 to stabilize linkages between the plasma membrane and subjacent actin cytoskeleton at the base of stereocilia. Post-translationally, phosphorylated by tyrosine-protein kinases. Phosphorylation by ROCK2 suppresses the head-to-tail association of the N-terminal and C-terminal halves resulting in an opened conformation which is capable of actin and membrane-binding. In terms of processing, S-nitrosylation is induced by interferon-gamma and oxidatively-modified low-densitity lipoprotein (LDL(ox)) possibly implicating the iNOS-S100A8/9 transnitrosylase complex.

It is found in the apical cell membrane. Its subcellular location is the cell projection. The protein resides in the microvillus membrane. It localises to the ruffle membrane. The protein localises to the cytoplasm. It is found in the cell cortex. Its subcellular location is the cytoskeleton. The protein resides in the microvillus. Its activity is regulated as follows. A head-to-tail association, of the N-terminal and C-terminal halves results in a closed conformation (inactive form) which is incapable of actin or membrane-binding. In terms of biological role, probably involved in connections of major cytoskeletal structures to the plasma membrane. In epithelial cells, required for the formation of microvilli and membrane ruffles on the apical pole. Along with PLEKHG6, required for normal macropinocytosis. The polypeptide is Ezrin (EZR) (Oryctolagus cuniculus (Rabbit)).